A 299-amino-acid chain; its full sequence is Sulfate adenylyltransferase subunit 2 (299 aa).

Residues 276 to 299 form a disordered region; that stretch reads EREGRVIDHDSAGSMEKKKREGYF.

This sequence belongs to the PAPS reductase family. CysD subfamily. As to quaternary structure, heterodimer composed of CysD, the smaller subunit, and CysN.

The enzyme catalyses sulfate + ATP + H(+) = adenosine 5'-phosphosulfate + diphosphate. The protein operates within sulfur metabolism; hydrogen sulfide biosynthesis; sulfite from sulfate: step 1/3. In terms of biological role, with CysN forms the ATP sulfurylase (ATPS) that catalyzes the adenylation of sulfate producing adenosine 5'-phosphosulfate (APS) and diphosphate, the first enzymatic step in sulfur assimilation pathway. APS synthesis involves the formation of a high-energy phosphoric-sulfuric acid anhydride bond driven by GTP hydrolysis by CysN coupled to ATP hydrolysis by CysD. The chain is Sulfate adenylyltransferase subunit 2 from Pseudoalteromonas translucida (strain TAC 125).